Consider the following 201-residue polypeptide: CASP-like protein 2A1 (201 aa).

The tract at residues 1–27 (MEKRDKGSSPMATMMGSRDENEDVENT) is disordered. Residues 1–30 (MEKRDKGSSPMATMMGSRDENEDVENTTRT) lie on the Cytoplasmic side of the membrane. Residues 31–51 (AETMLRLVPMALCVSALVVML) form a helical membrane-spanning segment. Over 52 to 72 (KNTQTNDYGSLSYSDLGAFRY) the chain is Extracellular. The chain crosses the membrane as a helical span at residues 73–93 (LVHVNGICAGYSLLSAVIVAM). The Cytoplasmic portion of the chain corresponds to 94–101 (PRASTMPR). Residues 102–122 (AWAFFLLDQVLTYVILAAGTV) traverse the membrane as a helical segment. Residues 123–152 (STEVLYLASKGDTTITWSEACVSFGGFCHK) are Extracellular-facing. Residues 153–173 (ALISIVITFVVVICYAALSLL) form a helical membrane-spanning segment. Residues 174–201 (SSYKLFSKYDSPVLTYPGKGIEIATFHG) lie on the Cytoplasmic side of the membrane.

This sequence belongs to the Casparian strip membrane proteins (CASP) family. In terms of assembly, homodimer and heterodimers.

Its subcellular location is the cell membrane. The protein is CASP-like protein 2A1 of Populus trichocarpa (Western balsam poplar).